The chain runs to 59 residues: MFAGLPSLTHEQQQKAVERIQELMAQGMSSGQAIALVAEELRANHSGELIVARFEDEDE.

The protein belongs to the UPF0181 family.

The chain is UPF0181 protein YoaH from Shigella flexneri serotype 5b (strain 8401).